We begin with the raw amino-acid sequence, 187 residues long: Meiotically up-regulated protein C1442.13c (187 aa).

Disordered regions lie at residues 15–46 (QWEN…LSNE) and 119–145 (IQEG…PAIN). Residues 26–41 (PPRKPKIVQPKKKPSK) are compositionally biased toward basic residues. The region spanning 145-187 (NNGKGKQLLEMMGWSRGKGLGSENQGMVDPVVAVVKNNKQGLH) is the G-patch domain.

The protein resides in the nucleus. The protein localises to the cytoplasm. It localises to the cytoskeleton. It is found in the microtubule organizing center. Its subcellular location is the spindle pole body. Functionally, has a role in meiosis and sporulation. Required for meiotic chromosome segregation. The protein is Meiotically up-regulated protein C1442.13c of Schizosaccharomyces pombe (strain 972 / ATCC 24843) (Fission yeast).